We begin with the raw amino-acid sequence, 412 residues long: MTEADGLRQRRPLRPQVVTDDNRTPEAKGGSSFSGRVFRATFLMLAAFLTIPLLGALVLLDSPIDPEPLSFKEPPLFLGVLQPNTKLQQAERLFENQLVGPESIANIGDVMFTGTADGRVVKLENGEVETIARFGSGPCKTRDDEPACGRPLGIRAGPNGTLFVVDAYKGLFEVNPWKREVKLLLSSETPIEGRKMSFLNDLTVTRDGRKIYFTDSSSKWQRRDYLLLLMEGTDDGRLLEYDTQTKEVKVLLDHLRFPNGVQLSPAEDFVLVVELAMVRIRRFYVSGLMKGGADVFVENLPGFPDNIRASSSGGYWVSMAAIRANPGFSMLDFLSERPFLKKVIFKLFSQETVMKFVPRYSLVLELSDSGTFLRSLHDPEGQVVTYVSEAHEHSGHLYLGSFRAPYLCRLRL.

Residues 1–32 (MTEADGLRQRRPLRPQVVTDDNRTPEAKGGSS) form a disordered region. At 1 to 39 (MTEADGLRQRRPLRPQVVTDDNRTPEAKGGSSFSGRVFR) the chain is on the cytoplasmic side. Position 19 is a phosphothreonine (threonine 19). Residues 40 to 60 (ATFLMLAAFLTIPLLGALVLL) traverse the membrane as a helical segment. Residues 61–412 (DSPIDPEPLS…RAPYLCRLRL (352 aa)) lie on the Extracellular side of the membrane. Asparagine 159 carries N-linked (GlcNAc...) asparagine glycosylation.

The protein belongs to the strictosidine synthase family.

Its subcellular location is the membrane. In terms of biological role, exhibits strong arylesterase activity with beta-naphthyl acetate and phenyl acetate. May play a role in adipocyte differentiation. This Bos taurus (Bovine) protein is Adipocyte plasma membrane-associated protein (APMAP).